The chain runs to 180 residues: ATP-dependent protease subunit HslV (180 aa).

Residue Thr-8 is part of the active site. Positions 165, 168, and 171 each coordinate Na(+).

The protein belongs to the peptidase T1B family. HslV subfamily. A double ring-shaped homohexamer of HslV is capped on each side by a ring-shaped HslU homohexamer. The assembly of the HslU/HslV complex is dependent on binding of ATP.

Its subcellular location is the cytoplasm. It carries out the reaction ATP-dependent cleavage of peptide bonds with broad specificity.. Allosterically activated by HslU binding. In terms of biological role, protease subunit of a proteasome-like degradation complex believed to be a general protein degrading machinery. The sequence is that of ATP-dependent protease subunit HslV from Halalkalibacterium halodurans (strain ATCC BAA-125 / DSM 18197 / FERM 7344 / JCM 9153 / C-125) (Bacillus halodurans).